Reading from the N-terminus, the 375-residue chain is Non-structural protein NS5 (375 aa).

The sequence is that of Non-structural protein NS5 (NS-5) from Rottboellia (Sorghum).